Here is a 439-residue protein sequence, read N- to C-terminus: Glycosyl hydrolase DigH (439 aa).

The N-terminal stretch at 1 to 27 is a signal peptide; sequence MDICSRNKKLTIRRPAILVALALLLCS. Cys28 carries N-palmitoyl cysteine lipidation. Cys28 is lipidated: S-diacylglycerol cysteine. The disordered stretch occupies residues 34 to 54; it reads ESMVTPPAGSKPPATTQQSSQ.

The protein belongs to the glycosyl hydrolase-like 10 (GHL10) family.

It is found in the cell outer membrane. Functionally, divisome-localized glycosyl hydrolase that cleaves peptide-free (denuded) peptidoglycans. The polypeptide is Glycosyl hydrolase DigH (Escherichia coli O157:H7).